Consider the following 444-residue polypeptide: Divalent metal cation transporter MntH (444 aa).

11 consecutive transmembrane segments (helical) span residues 39-59 (LLFA…GNFA), 69-89 (GYTL…FQAL), 109-128 (FSRP…AMAT), 146-166 (LPLI…LLFE), 175-195 (LVIG…MFIA), 215-235 (TALT…AVYL), 264-284 (VILA…MAAS), 304-324 (TPLL…TSGI), 346-366 (IPVW…ILAG), 372-392 (ALVI…IALI), and 417-437 (AAAI…GFTI).

Belongs to the NRAMP family.

Its subcellular location is the cell inner membrane. In terms of biological role, h(+)-stimulated, divalent metal cation uptake system. This chain is Divalent metal cation transporter MntH, found in Granulibacter bethesdensis (strain ATCC BAA-1260 / CGDNIH1).